We begin with the raw amino-acid sequence, 65 residues long: DNA gyrase inhibitor YacG (65 aa).

Zn(2+)-binding residues include Cys9, Cys12, Cys28, and Cys32. Residues 44 to 65 (EKRIPSSSDLSESDDWSEEPKQ) form a disordered region. Acidic residues predominate over residues 54–65 (SESDDWSEEPKQ).

The protein belongs to the DNA gyrase inhibitor YacG family. Interacts with GyrB. It depends on Zn(2+) as a cofactor.

Its function is as follows. Inhibits all the catalytic activities of DNA gyrase by preventing its interaction with DNA. Acts by binding directly to the C-terminal domain of GyrB, which probably disrupts DNA binding by the gyrase. This chain is DNA gyrase inhibitor YacG, found in Escherichia coli O6:H1 (strain CFT073 / ATCC 700928 / UPEC).